A 130-amino-acid polypeptide reads, in one-letter code: kinetoplast-associated protein 2-1 (130 aa).

Positions 1–10 (MLRRTVSNFA) are excised as a propeptide. A disordered region spans residues 89–130 (LTKKWNETKQAQREKAQKAQKKTKSAKSKVKKAAKKSKKSKK). A compositionally biased stretch (basic and acidic residues) spans 92–105 (KWNETKQAQREKAQ). Basic residues predominate over residues 106–130 (KAQKKTKSAKSKVKKAAKKSKKSKK).

Belongs to the KAP family. As to quaternary structure, associates with the kinetoplast DNA network.

The protein localises to the mitochondrion matrix. It localises to the kinetoplast. Its function is as follows. Histone H1-like DNA-binding protein involved in the organization and segregation of kinetoplast DNA (kDNA). The mitochondrial DNA of kinetoplastid protozoa consists of about 5,000 minicircles and 20 to 30 maxicircles. These circular DNAs are held together by catenation into a highly organized compact disk structure referred to as a kinetoplast DNA (kDNA) network. Binds preferentially to a specific fragment of minicircle DNA and is able to compact kDNA networks through DNA charge neutralization and condensation. The chain is kinetoplast-associated protein 2-1 (KAP2-1) from Crithidia fasciculata.